The following is a 159-amino-acid chain: 6,7-dimethyl-8-ribityllumazine synthase (159 aa).

5-amino-6-(D-ribitylamino)uracil contacts are provided by residues tryptophan 26, 58 to 60, and 80 to 82; these read SFE and VVI. 85-86 contributes to the (2S)-2-hydroxy-3-oxobutyl phosphate binding site; that stretch reads GT. Histidine 88 functions as the Proton donor in the catalytic mechanism. Residue phenylalanine 113 coordinates 5-amino-6-(D-ribitylamino)uracil. (2S)-2-hydroxy-3-oxobutyl phosphate is bound at residue arginine 127.

The protein belongs to the DMRL synthase family.

The catalysed reaction is (2S)-2-hydroxy-3-oxobutyl phosphate + 5-amino-6-(D-ribitylamino)uracil = 6,7-dimethyl-8-(1-D-ribityl)lumazine + phosphate + 2 H2O + H(+). Its pathway is cofactor biosynthesis; riboflavin biosynthesis; riboflavin from 2-hydroxy-3-oxobutyl phosphate and 5-amino-6-(D-ribitylamino)uracil: step 1/2. Functionally, catalyzes the formation of 6,7-dimethyl-8-ribityllumazine by condensation of 5-amino-6-(D-ribitylamino)uracil with 3,4-dihydroxy-2-butanone 4-phosphate. This is the penultimate step in the biosynthesis of riboflavin. This chain is 6,7-dimethyl-8-ribityllumazine synthase, found in Renibacterium salmoninarum (strain ATCC 33209 / DSM 20767 / JCM 11484 / NBRC 15589 / NCIMB 2235).